A 540-amino-acid chain; its full sequence is Chaperonin GroEL (540 aa).

Residues 30 to 33 (TLGP), K51, 87 to 91 (DGTTT), G415, and D495 contribute to the ATP site.

The protein belongs to the chaperonin (HSP60) family. In terms of assembly, forms a cylinder of 14 subunits composed of two heptameric rings stacked back-to-back. Interacts with the co-chaperonin GroES.

It is found in the cytoplasm. The enzyme catalyses ATP + H2O + a folded polypeptide = ADP + phosphate + an unfolded polypeptide.. In terms of biological role, together with its co-chaperonin GroES, plays an essential role in assisting protein folding. The GroEL-GroES system forms a nano-cage that allows encapsulation of the non-native substrate proteins and provides a physical environment optimized to promote and accelerate protein folding. This is Chaperonin GroEL from Serratia marcescens.